We begin with the raw amino-acid sequence, 539 residues long: Phosphoenolpyruvate carboxykinase (ATP) (539 aa).

Substrate contacts are provided by R64, Y206, and K212. ATP contacts are provided by residues K212, H231, and 247–255 (GLSGTGKTT). The Mn(2+) site is built by K212 and H231. D268 is a Mn(2+) binding site. ATP contacts are provided by residues E296, R332, 448-449 (RI), and T454. Position 332 (R332) interacts with substrate.

The protein belongs to the phosphoenolpyruvate carboxykinase (ATP) family. Monomer. It depends on Mn(2+) as a cofactor.

It localises to the cytoplasm. The enzyme catalyses oxaloacetate + ATP = phosphoenolpyruvate + ADP + CO2. Its pathway is carbohydrate biosynthesis; gluconeogenesis. Involved in the gluconeogenesis. Catalyzes the conversion of oxaloacetate (OAA) to phosphoenolpyruvate (PEP) through direct phosphoryl transfer between the nucleoside triphosphate and OAA. This Yersinia pseudotuberculosis serotype O:1b (strain IP 31758) protein is Phosphoenolpyruvate carboxykinase (ATP).